Consider the following 135-residue polypeptide: Small ribosomal subunit protein bS16m (135 aa).

The transit peptide at 1–34 (MVQLTTIFCKAYHGGHLTIRLALGGCTNRPFYRI) directs the protein to the mitochondrion.

It belongs to the bacterial ribosomal protein bS16 family. Component of the mitochondrial ribosome small subunit (28S) which comprises a 12S rRNA and about 30 distinct proteins.

The protein resides in the mitochondrion. The chain is Small ribosomal subunit protein bS16m (Mrps16) from Mus musculus (Mouse).